Here is a 478-residue protein sequence, read N- to C-terminus: Proline--tRNA ligase (478 aa).

It belongs to the class-II aminoacyl-tRNA synthetase family. ProS type 3 subfamily. As to quaternary structure, homodimer.

The protein resides in the cytoplasm. It catalyses the reaction tRNA(Pro) + L-proline + ATP = L-prolyl-tRNA(Pro) + AMP + diphosphate. In terms of biological role, catalyzes the attachment of proline to tRNA(Pro) in a two-step reaction: proline is first activated by ATP to form Pro-AMP and then transferred to the acceptor end of tRNA(Pro). The chain is Proline--tRNA ligase from Clostridium novyi (strain NT).